The sequence spans 367 residues: Probable peptidoglycan glycosyltransferase FtsW (367 aa).

9 helical membrane-spanning segments follow: residues 32-52 (LIFILIGLFAMAFTFLMPMKF), 57-77 (AFWGYCICFLLLALVLVPGIG), 87-107 (IPIGPFNFQPSEFAKLTMIVF), 119-139 (IHGLKGFLPIIIYLGIICFLL), 149-169 (MVVVAIVMSILLLGGLGFALF), 171-191 (LLFLSAVLLVIAAILTAPWRM), 251-271 (VVGEELGFVGIFFVILLFVLL), 296-316 (GVVVWFGVQAIVNLGVCFGVF), and 323-343 (LPFISYGGSSIVISLMAFGLL).

It belongs to the SEDS family. FtsW subfamily.

Its subcellular location is the cell inner membrane. The enzyme catalyses [GlcNAc-(1-&gt;4)-Mur2Ac(oyl-L-Ala-gamma-D-Glu-L-Lys-D-Ala-D-Ala)](n)-di-trans,octa-cis-undecaprenyl diphosphate + beta-D-GlcNAc-(1-&gt;4)-Mur2Ac(oyl-L-Ala-gamma-D-Glu-L-Lys-D-Ala-D-Ala)-di-trans,octa-cis-undecaprenyl diphosphate = [GlcNAc-(1-&gt;4)-Mur2Ac(oyl-L-Ala-gamma-D-Glu-L-Lys-D-Ala-D-Ala)](n+1)-di-trans,octa-cis-undecaprenyl diphosphate + di-trans,octa-cis-undecaprenyl diphosphate + H(+). The protein operates within cell wall biogenesis; peptidoglycan biosynthesis. Functionally, peptidoglycan polymerase that is essential for cell division. This Taylorella equigenitalis (strain MCE9) protein is Probable peptidoglycan glycosyltransferase FtsW.